We begin with the raw amino-acid sequence, 125 residues long: Flagellar protein FliT (125 aa).

Positions 1–50 (MDNKMDLLSAYQRILSLSEQMLNLAKNEKWDELVDMEITYLKAVEVISHS) are required for homodimerization. The fliD binding stretch occupies residues 60-98 (LQQKMTNILQIILDNENEIKKLLQKRLDELSKLIKQASQ).

This sequence belongs to the FliT family. Homodimer. Interacts with FliD and FlhC.

It is found in the cytoplasm. Its subcellular location is the cytosol. In terms of biological role, dual-function protein that regulates the transcription of class 2 flagellar operons and that also acts as an export chaperone for the filament-capping protein FliD. As a transcriptional regulator, acts as an anti-FlhDC factor; it directly binds FlhC, thus inhibiting the binding of the FlhC/FlhD complex to class 2 promoters, resulting in decreased expression of class 2 flagellar operons. As a chaperone, effects FliD transition to the membrane by preventing its premature polymerization, and by directing it to the export apparatus. The polypeptide is Flagellar protein FliT (Photorhabdus laumondii subsp. laumondii (strain DSM 15139 / CIP 105565 / TT01) (Photorhabdus luminescens subsp. laumondii)).